The chain runs to 256 residues: tRNA (guanine-N(7)-)-methyltransferase (256 aa).

Residues M1 to Q15 show a composition bias toward polar residues. A disordered region spans residues M1–P22. Residues G79, E102–I103, N137–A138, and L157 each bind S-adenosyl-L-methionine. The active site involves D160. S235–E237 is a binding site for S-adenosyl-L-methionine.

The protein belongs to the class I-like SAM-binding methyltransferase superfamily. TrmB family.

Its subcellular location is the nucleus. The catalysed reaction is guanosine(46) in tRNA + S-adenosyl-L-methionine = N(7)-methylguanosine(46) in tRNA + S-adenosyl-L-homocysteine. It functions in the pathway tRNA modification; N(7)-methylguanine-tRNA biosynthesis. Functionally, catalyzes the formation of N(7)-methylguanine at position 46 (m7G46) in tRNA. The chain is tRNA (guanine-N(7)-)-methyltransferase from Drosophila yakuba (Fruit fly).